Consider the following 146-residue polypeptide: MVMGLHLLLLVFILGLGLTPPTLAQNDIRYIKFLDQHYDPKTKNGNDKYCEKMMRLRNMISPCKEINTFIHGNKASIKAICGNQNGEPHNGNQRISKSAFQVTICRHIGGSPRPPCRYRATAGFRNLVVACENDLPVHLDESIFRP.

Positions 1-24 are cleaved as a signal peptide; that stretch reads MVMGLHLLLLVFILGLGLTPPTLA. Gln25 bears the Pyrrolidone carboxylic acid mark. His37 acts as the Proton acceptor in catalysis. Intrachain disulfides connect Cys50–Cys105, Cys63–Cys116, and Cys81–Cys131. Positions 55-59 match the Nucleolar localization signal motif; it reads RLRNM. Cys105 lines the tRNA pocket. His138 (proton donor) is an active-site residue.

The protein belongs to the pancreatic ribonuclease family. Homodimer. Interacts with RNH1; inhibiting ANG ribonuclease activity. Interacts with PCNA.

It is found in the secreted. It localises to the nucleus. The protein resides in the nucleolus. The protein localises to the cytoplasm. Its subcellular location is the stress granule. Has weak tRNA ribonuclease activity by itself due to partial autoinhibition by its C-terminus, which folds into a short alpha-helix that partially occludes the substrate-binding site. In absence of stress, the ribonuclease activity is inhibited by RNH1 in the cytoplasm. In response to stress, dissociates from RNH1 in the cytoplasm and associates with cytoplasmic ribosomes with vacant A-sites: ribosomes directly activate the tRNA ribonuclease activity of ANG by refolding the C-terminal alpha-helix. In response to stress, the angiogenic activity of ANG is inhibited by RNH1 in the nucleus. In terms of biological role, secreted ribonuclease that can either promote or restrict cell proliferation of target cells, depending on the context. Endocytosed in target cells via its receptor PLXNB2 and translocates to the cytoplasm or nucleus. Under stress conditions, localizes to the cytoplasm and promotes the assembly of stress granules (SGs): specifically cleaves a subset of tRNAs within anticodon loops to produce tRNA-derived stress-induced fragments (tiRNAs), resulting in translation repression and inhibition of cell proliferation. tiRNas also prevent formation of apoptosome, thereby promoting cell survival. Preferentially cleaves RNAs between a pyrimidine and an adenosine residue, suggesting that it cleaves the anticodon loop of tRNA(Ala) (32-UUAGCAU-38) after positions 33 and 36. Cleaves a subset of tRNAs, including tRNA(Ala), tRNA(Glu), tRNA(Gly), tRNA(Lys), tRNA(Val), tRNA(His), tRNA(Asp) and tRNA(Sec). Under growth conditions and in differentiated cells, translocates to the nucleus and stimulates ribosomal RNA (rRNA) transcription, including that containing the initiation site sequences of 45S rRNA, thereby promoting cell growth and proliferation. Angiogenin induces vascularization of normal and malignant tissues via its ability to promote rRNA transcription. Involved in hematopoietic stem and progenitor cell (HSPC) growth and survival by promoting rRNA transcription in growth conditions and inhibiting translation in response to stress, respectively. Mediates the crosstalk between myeloid and intestinal epithelial cells to protect the intestinal epithelial barrier integrity: secreted by myeloid cells and promotes intestinal epithelial cells proliferation and survival. Also mediates osteoclast-endothelial cell crosstalk in growing bone: produced by osteoclasts and protects the neighboring vascular cells against senescence by promoting rRNA transcription. In Aotus trivirgatus (Three-striped night monkey), this protein is Angiogenin (ANG).